A 235-amino-acid polypeptide reads, in one-letter code: Uridylate kinase (235 aa).

12–15 (KISG) serves as a coordination point for ATP. G54 lines the UMP pocket. G55 and R59 together coordinate ATP. Residues D72 and 133–140 (TGNPFFST) contribute to the UMP site. 2 residues coordinate ATP: Y166 and D169.

It belongs to the UMP kinase family. Homohexamer.

It is found in the cytoplasm. The catalysed reaction is UMP + ATP = UDP + ADP. Its pathway is pyrimidine metabolism; CTP biosynthesis via de novo pathway; UDP from UMP (UMPK route): step 1/1. With respect to regulation, inhibited by UTP. Functionally, catalyzes the reversible phosphorylation of UMP to UDP. The polypeptide is Uridylate kinase (Acetivibrio thermocellus (strain ATCC 27405 / DSM 1237 / JCM 9322 / NBRC 103400 / NCIMB 10682 / NRRL B-4536 / VPI 7372) (Clostridium thermocellum)).